Here is a 276-residue protein sequence, read N- to C-terminus: Sec-independent protein translocase protein TatC (276 aa).

Residues 1–29 are disordered; it reads MVSLTSVPPYADATPDTRASSGPAPGRRK. 6 consecutive transmembrane segments (helical) span residues 49–69, 103–123, 136–156, 187–207, 221–241, and 242–262; these read GGLV…LVLL, LFLA…AFVT, GFLG…WWVL, LVLA…LNLA, WAVL…DALT, and MVLV…VAVW.

The protein belongs to the TatC family. As to quaternary structure, the Tat system comprises two distinct complexes: a TatABC complex, containing multiple copies of TatA, TatB and TatC subunits, and a separate TatA complex, containing only TatA subunits. Substrates initially bind to the TatABC complex, which probably triggers association of the separate TatA complex to form the active translocon.

It is found in the cell membrane. In terms of biological role, part of the twin-arginine translocation (Tat) system that transports large folded proteins containing a characteristic twin-arginine motif in their signal peptide across membranes. Together with TatB, TatC is part of a receptor directly interacting with Tat signal peptides. In Xylanimonas cellulosilytica (strain DSM 15894 / JCM 12276 / CECT 5975 / KCTC 9989 / LMG 20990 / NBRC 107835 / XIL07), this protein is Sec-independent protein translocase protein TatC.